The chain runs to 56 residues: Chymotrypsin inhibitor (56 aa).

Cystine bridges form between Cys3/Cys36, Cys12/Cys32, Cys16/Cys28, Cys20/Cys56, and Cys38/Cys50. The TIL domain occupies 3 to 56 (CGPNEVFNTCGSACAPTCAQPKTRICTMQCRIGCQCQEGFLRNGEGACVLPENC).

This sequence belongs to the serine protease inhibitor-like (TIL domain-containing) family.

It is found in the secreted. Functionally, chymotrypsin and cathepsin G inhibitor. This chain is Chymotrypsin inhibitor, found in Apis mellifera (Honeybee).